Here is a 203-residue protein sequence, read N- to C-terminus: MLILASASQSRKKLLENCQIEFFQISSDFDETTIQEKNIFNLALELSFQKANSLSENIQNLSLPEELNHGPLEILGCDSIFEFKGEAYGKPSNKEEAFIRWKKMSGEFGFLHTGHTLIIGNFDSTSKIFKITEIIKKTVSSRVYFSNLEDWEIKSYVDTNEPLYCAGGFALEGIGGKYIEKIEGCFSNVMGLSLPWLRKNLYR.

Aspartate 78 acts as the Proton acceptor in catalysis.

It belongs to the Maf family. The cofactor is a divalent metal cation.

Its subcellular location is the cytoplasm. It carries out the reaction a ribonucleoside 5'-triphosphate + H2O = a ribonucleoside 5'-phosphate + diphosphate + H(+). It catalyses the reaction a 2'-deoxyribonucleoside 5'-triphosphate + H2O = a 2'-deoxyribonucleoside 5'-phosphate + diphosphate + H(+). In terms of biological role, nucleoside triphosphate pyrophosphatase. May have a dual role in cell division arrest and in preventing the incorporation of modified nucleotides into cellular nucleic acids. The protein is Nucleoside triphosphate pyrophosphatase of Prochlorococcus marinus (strain MIT 9301).